A 418-amino-acid chain; its full sequence is Probable mitochondrial adenine nucleotide transporter BTL2 (418 aa).

Solcar repeat units follow at residues 122-205 (MNTR…YRKQ), 215-300 (ATNF…LKSS), and 329-414 (LGPI…MKIV). Transmembrane regions (helical) follow at residues 127 to 147 (HLWAGAVAAMVSKTFLAPLER), 180 to 200 (GNLLNVLRTAPFKAVNFCAYD), 221 to 241 (FVAGAAAGITATVLCLPLDTI), 276 to 296 (LVPSIASMALSGAVFYGVYDI), 335 to 355 (LMYGAIAGACTEVATYPFEVV), and 383 to 403 (IPALYAGLLPSLLQVLPSASI).

Belongs to the mitochondrial carrier (TC 2.A.29) family.

Its subcellular location is the mitochondrion inner membrane. Probable mitochondrial adenylate carrier that catalyzes the transport of ATP, ADP and AMP. The polypeptide is Probable mitochondrial adenine nucleotide transporter BTL2 (Arabidopsis thaliana (Mouse-ear cress)).